A 528-amino-acid polypeptide reads, in one-letter code: Importin subunit alpha-2 (528 aa).

Residues 1–15 (MADDSASPSPSSASP) show a composition bias toward low complexity. The interval 1–36 (MADDSASPSPSSASPLQHHREALKSSVRNTAASRRR) is disordered. 8 ARM repeats span residues 125-165 (VPLV…NIAA), 167-206 (EPEE…NVAG), 209-248 (AELR…NLIK), 253-292 (KAAN…YLSA), 294-335 (SDRG…NLIA), 338-383 (DYMV…NIAA), 386-425 (FEHK…NLCV), and 438-477 (VEHL…LVMR).

It belongs to the importin alpha family. In terms of assembly, forms a complex with importin subunit beta-1. The whole complex, most stable and composed of importin alpha, importin beta and NLS substrate, is referred to as PTAC or pore targeting complex. Expressed in root, callus, and etiolated leaf. Low expression in green leaf.

It localises to the cytoplasm. Its subcellular location is the perinuclear region. Functionally, binds specifically and directly to substrates containing either a simple or bipartite NLS motif. Promotes docking of import substrates to the nuclear envelope. In Oryza sativa subsp. japonica (Rice), this protein is Importin subunit alpha-2.